The sequence spans 215 residues: Large ribosomal subunit protein bL25 (215 aa).

The disordered stretch occupies residues 190–215; sequence VLTDAEEETDETPEEPEAIRQKGDEE. The span at 193–205 shows a compositional bias: acidic residues; the sequence is DAEEETDETPEEP. A compositionally biased stretch (basic and acidic residues) spans 206–215; it reads EAIRQKGDEE.

Belongs to the bacterial ribosomal protein bL25 family. CTC subfamily. As to quaternary structure, part of the 50S ribosomal subunit; part of the 5S rRNA/L5/L18/L25 subcomplex. Contacts the 5S rRNA. Binds to the 5S rRNA independently of L5 and L18.

Functionally, this is one of the proteins that binds to the 5S RNA in the ribosome where it forms part of the central protuberance. In Maricaulis maris (strain MCS10) (Caulobacter maris), this protein is Large ribosomal subunit protein bL25.